The following is a 291-amino-acid chain: Putative carboxymethylenebutenolidase (291 aa).

The N-terminal stretch at 1-40 (MTAFDADLRSLAAQTTLSRRTVIATSLATGFALAVQPVAA) is a signal peptide. Active-site residues include C170, D227, and H259.

Belongs to the dienelactone hydrolase family.

It carries out the reaction 2-(5-oxo-2,5-dihydrofuran-2-ylidene)acetate + H2O = 4-oxohex-2-enedioate + H(+). The polypeptide is Putative carboxymethylenebutenolidase (Methylorubrum extorquens (strain ATCC 14718 / DSM 1338 / JCM 2805 / NCIMB 9133 / AM1) (Methylobacterium extorquens)).